We begin with the raw amino-acid sequence, 221 residues long: GTP-binding nuclear protein Ran-2 (221 aa).

The Small GTPase Ran-type domain occupies 10 to 174 (DYPSFKLVIV…LYLARKLAGD (165 aa)). 21–28 (DGGTGKTT) contacts GTP. Residues 40–48 (KKYEPTIGV) are switch-I. GTP-binding positions include G71, 125 to 128 (NKVD), and 153 to 155 (SAK). A switch-II region spans residues 71–87 (GQEKFGGLRDGYYIHGQ).

Belongs to the small GTPase superfamily. Ran family. As to quaternary structure, found in a nuclear export complex with RanGTP, exportin and pre-miRNA.

The protein localises to the nucleus. GTP-binding protein involved in nucleocytoplasmic transport. Required for the import of protein into the nucleus and also for RNA export. Involved in chromatin condensation and control of cell cycle. In Oryza sativa subsp. indica (Rice), this protein is GTP-binding nuclear protein Ran-2 (RAN2).